The sequence spans 1195 residues: MGEEGPPSLEYIQAKDLFPPKELVKEEENLQVPFTVLQGEGVEFLGRAADALIAISNYRLHIKFKDSVINVPLRMIDSVESRDMFQLHISCKDSKVVRCHFSTFKQCQEWLSRLSRATARPAKPEDLFAFAYHAWCLGLTEEDQHTHLCQPGEHIRCRQEAELARMGFDLQNVWRVSHINSNYKLCPSYPQKLLVPVWITDKELENVASFRSWKRIPVVVYRHLRNGAAIARCSQPEISWWGWRNADDEYLVTSIAKACALDPGTRATGGSLSTGNNDTSEACDADFDSSLTACSGVESTAAPQKLLILDARSYTAAVANRAKGGGCECEEYYPNCEVVFMGMANIHAIRNSFQYLRAVCSQMPDPSNWLSALESTKWLQHLSVMLKAAVLVANTVDREGRPVLVHCSDGWDRTPQIVALAKILLDPYYRTLEGFQVLVESDWLDFGHKFGDRCGHQENVEDQNEQCPVFLQWLDSVHQLLKQFPCLFEFNEAFLVKLVQHTYSCLYGTFLANNPCEREKRNIYKRTCSVWALLRAGNKNFHNFLYTPSSDMVLHPVCHVRALHLWTAVYLPASSPCTLGEENMDLYLSPVAQSQEFSGRSLDRLPKTRSMDDLLSACDTSSPLTRTSSDPNLNNHCQEVRVGLEPWHSNPEGSETSFVDSGVGGPQQTVGEVGLPPPLPSSQKDYLSNKPFKSHKSCSPSYKLLNTAVPREMKSNTSDPEIKVLEETKGPAPDPSAQDELGRTLDGIGEPPEHCPETEAVSALSKVISNKCDGVCNFPESSQNSPTGTPQQAQPDSMLGVPSKCVLDHSLSTVCNPPSAACQTPLDPSTDFLNQDPSGSVASISHQEQLSSVPDLTHGEEDIGKRGNNRNGQLLENPRFGKMPLELVRKPISQSQISEFSFLGSNWDSFQGMVTSFPSGEATPRRLLSYGCCSKRPNSKQMRATGPCFGGQWAQREGVKSPVCSSHSNGHCTGPGGKNQMWLSSHPKQVSSTKPVPLNCPSPVPPLYLDDDGLPFPTDVIQHRLRQIEAGYKQEVEQLRRQVRELQMRLDIRHCCAPPAEPPMDYEDDFTCLKESDGSDTEDFGSDHSEDCLSEASWEPVDKKETEVTRWVPDHMASHCYNCDCEFWLAKRRHHCRNCGNVFCAGCCHLKLPIPDQQLYDPVLVCNSCYEHIQVSRARELMSQQLKKPIATASS.

Ser8 is subject to Phosphoserine. The 418-residue stretch at 153 to 570 (EHIRCRQEAE…RALHLWTAVY (418 aa)) folds into the Myotubularin phosphatase domain. A 1,2-diacyl-sn-glycero-3-phospho-(1D-myo-inositol-3,5-bisphosphate)-binding residues include Asn320, Asn345, and Ile346. Residues Asn320, Asn345, and Ile346 each contribute to the a 1,2-diacyl-sn-glycero-3-phospho-(1D-myo-inositol-3-phosphate) site. Cys407 acts as the Phosphocysteine intermediate in catalysis. Residues Ser408, Asp409, Gly410, Trp411, Asp412, Arg413, Lys449, and Arg453 each contribute to the a 1,2-diacyl-sn-glycero-3-phospho-(1D-myo-inositol-3,5-bisphosphate) site. A 1,2-diacyl-sn-glycero-3-phospho-(1D-myo-inositol-3-phosphate)-binding residues include Ser408, Asp409, Gly410, Trp411, Asp412, and Arg413. Arg453 contributes to the a 1,2-diacyl-sn-glycero-3-phospho-(1D-myo-inositol-3-phosphate) binding site. 2 positions are modified to phosphoserine: Ser610 and Ser629. Disordered stretches follow at residues 645 to 756 (EPWH…EHCP), 780 to 800 (ESSQ…SMLG), and 827 to 877 (DPST…LLEN). Residues 720 to 729 (PEIKVLEETK) are compositionally biased toward basic and acidic residues. Composition is skewed to polar residues over residues 780 to 795 (ESSQ…QAQP) and 831 to 854 (DFLN…SSVP). Residues 1004–1008 (VPPLY) carry the PY-motif; substrate motif for NEDD4 motif. Positions 1023–1055 (HRLRQIEAGYKQEVEQLRRQVRELQMRLDIRHC) form a coiled coil. The FYVE-type zinc-finger motif lies at 1114–1174 (DHMASHCYNC…VCNSCYEHIQ (61 aa)). Positions 1120, 1123, 1136, 1139, 1144, 1147, 1166, and 1169 each coordinate Zn(2+).

Belongs to the protein-tyrosine phosphatase family. Non-receptor class myotubularin subfamily. In terms of assembly, homooligomeric. Forms MTMR3:MTMR4 heterooligomers; regulates the localization of both proteins. The MTMR3:MTMR4 heterooligomer can also recruit both CEP55 and PLK1; occurs during early mitosis, regulates the phosphorylation of CEP55 by PLK1 and its recruitment to the midbody where it can mediate cell abscission. Interacts with SMAD2 and SMAD3; negatively regulates TGF-beta signaling through SMAD2 and SMAD3 dephosphorylation and retention in endosomes. Interacts with SMAD1; negatively regulates BMP signaling through SMAD1 dephosphorylation and retention in endosomes. Ubiquitinated. Ubiquitination by NEDD4 probably leads to proteasomal degradation. Post-translationally, phosphorylated by CDK1 during mitosis. In terms of tissue distribution, expressed in brain, heart, kidney, spleen, liver, colon, testis, muscle, placenta, thyroid gland, pancreas, ovary, prostate, skin, peripheral blood, and bone marrow.

It localises to the early endosome membrane. The protein resides in the recycling endosome membrane. The protein localises to the late endosome membrane. It is found in the cytoplasmic vesicle. Its subcellular location is the phagosome membrane. It catalyses the reaction a 1,2-diacyl-sn-glycero-3-phospho-(1D-myo-inositol-3-phosphate) + H2O = a 1,2-diacyl-sn-glycero-3-phospho-(1D-myo-inositol) + phosphate. It carries out the reaction a 1,2-diacyl-sn-glycero-3-phospho-(1D-myo-inositol-3,5-bisphosphate) + H2O = a 1,2-diacyl-sn-glycero-3-phospho-(1D-myo-inositol-5-phosphate) + phosphate. The catalysed reaction is 1,2-dioctanoyl-sn-glycero-3-phospho-(1-D-myo-inositol-3-phosphate) + H2O = 1,2-dioctanoyl-sn-glycero-3-phospho-(1D-myo-inositol) + phosphate. The enzyme catalyses 1,2-dioctanoyl-sn-glycero-3-phospho-(1D-myo-inositol-3,5-bisphosphate) + H2O = 1,2-dioctanoyl-sn-glycero-3-phospho-(1D-myo-inositol-5-phosphate) + phosphate. The phosphatidylinositol-3-phosphate phosphatase activity is inhibited by vanadate. Its function is as follows. Lipid phosphatase that specifically dephosphorylates the D-3 position of phosphatidylinositol 3-phosphate and phosphatidylinositol 3,5-bisphosphate, generating phosphatidylinositol and phosphatidylinositol 5-phosphate. Decreases the levels of phosphatidylinositol 3-phosphate, a phospholipid found in cell membranes where it acts as key regulator of both cell signaling and intracellular membrane traffic, in a subset of endosomal membranes to negatively regulate both endocytic recycling and trafficking and/or maturation of endosomes toward lysosomes. Through phosphatidylinositol 3-phosphate turnover in phagosome membranes regulates phagocytosis and phagosome maturation. By decreasing phosphatidylinositol 3-monophosphate (PI3P) levels in immune cells it can also regulate the innate immune response. Beside its lipid phosphatase activity, can also function as a molecular adapter to regulate midbody abscission during mitotic cytokinesis. Can also negatively regulate TGF-beta and BMP signaling through Smad proteins dephosphorylation and retention in endosomes. The chain is Phosphatidylinositol-3,5-bisphosphate 3-phosphatase MTMR4 from Homo sapiens (Human).